A 201-amino-acid chain; its full sequence is MESEKSKFDYYIVTPDSLFERVDGIPMTKEEIRLISLNRLGVRNGGHFLDIGTGTGSVAVDMSRLAGPNGKIIALDRDEKAIKLARINLDRLSPYKNIQLVLADAYAYSPADSFDAIFIGGGTGDLPNLVSKYVPFLKSGARVVINAIQVKTLNDAVESLELNNFRNVSVIEVQISVGMKTGSSYAMIARNPIFVVSGEQP.

S-adenosyl-L-methionine contacts are provided by residues Thr28, Gly52 to Gly56, Asp76, and Ala105.

The protein belongs to the methyltransferase superfamily. Archaeal-type CbiT family.

The enzyme catalyses Co-precorrin-6B + S-adenosyl-L-methionine = Co-precorrin-7 + S-adenosyl-L-homocysteine + CO2. Its pathway is cofactor biosynthesis; adenosylcobalamin biosynthesis; cob(II)yrinate a,c-diamide from sirohydrochlorin (anaerobic route): step 8/10. Functionally, catalyzes the methylation of C-15 in cobalt-precorrin-6B followed by the decarboxylation of C-12 to form cobalt-precorrin-7. In Thermoplasma volcanium (strain ATCC 51530 / DSM 4299 / JCM 9571 / NBRC 15438 / GSS1), this protein is Probable cobalt-precorrin-6B C(15)-methyltransferase (decarboxylating).